Here is a 298-residue protein sequence, read N- to C-terminus: MTQTVPYRCGRIAVIGRPNVGKSTLTNALVGTKISIVSNRPQTTRHRLLGIATFPEGQIILVDTPGLHREQKHPMNRLMNRTARGSLEDVDAALLVTESTHWNEEDTLAYNLLNDTGIPVVLVINKIDRFKDKSALLPFLTHINENHTFATIHPVSALKRKGLKTLVSDLLALLPEGGPMFSEDEITDRSQRFLASELVREQVMRQLGKELPYATTVEIEYFTENTGLFRIGALIWVERESQKAIVIGKGGVRLKEIGVKARQQMERLFQTKVFLETWVRVRKDWSNNEAALKTFGYE.

Residues 8–176 form the Era-type G domain; it reads RCGRIAVIGR…VSDLLALLPE (169 aa). Residues 16–23 form a G1 region; that stretch reads GRPNVGKS. GTP is bound at residue 16–23; it reads GRPNVGKS. Positions 42 to 46 are G2; it reads QTTRH. The segment at 63-66 is G3; the sequence is DTPG. GTP is bound by residues 63 to 67 and 125 to 128; these read DTPGL and NKID. Residues 125–128 form a G4 region; that stretch reads NKID. The tract at residues 155–157 is G5; it reads VSA. Residues 199–283 enclose the KH type-2 domain; that stretch reads VREQVMRQLG…FLETWVRVRK (85 aa).

This sequence belongs to the TRAFAC class TrmE-Era-EngA-EngB-Septin-like GTPase superfamily. Era GTPase family. Monomer.

It is found in the cytoplasm. The protein localises to the cell inner membrane. An essential GTPase that binds both GDP and GTP, with rapid nucleotide exchange. Plays a role in 16S rRNA processing and 30S ribosomal subunit biogenesis and possibly also in cell cycle regulation and energy metabolism. The chain is GTPase Era from Xylella fastidiosa (strain Temecula1 / ATCC 700964).